The chain runs to 396 residues: 8-amino-7-oxononanoate synthase (396 aa).

Residue arginine 21 participates in substrate binding. Residue 112–113 (GY) participates in pyridoxal 5'-phosphate binding. Position 137 (histidine 137) interacts with substrate. Positions 183, 211, and 239 each coordinate pyridoxal 5'-phosphate. Lysine 242 carries the post-translational modification N6-(pyridoxal phosphate)lysine. Threonine 358 contacts substrate.

It belongs to the class-II pyridoxal-phosphate-dependent aminotransferase family. BioF subfamily. Homodimer. It depends on pyridoxal 5'-phosphate as a cofactor.

It carries out the reaction 6-carboxyhexanoyl-[ACP] + L-alanine + H(+) = (8S)-8-amino-7-oxononanoate + holo-[ACP] + CO2. It participates in cofactor biosynthesis; biotin biosynthesis. In terms of biological role, catalyzes the decarboxylative condensation of pimeloyl-[acyl-carrier protein] and L-alanine to produce 8-amino-7-oxononanoate (AON), [acyl-carrier protein], and carbon dioxide. This is 8-amino-7-oxononanoate synthase from Bordetella petrii (strain ATCC BAA-461 / DSM 12804 / CCUG 43448).